Reading from the N-terminus, the 725-residue chain is Endoglucanase G (725 aa).

The first 35 residues, 1–35 (MLKTKRKLTKAIGVALSISILSSLVSFIPQTNTYA), serve as a signal peptide directing secretion. Aspartate 93 serves as the catalytic Nucleophile. Active-site residues include histidine 408, aspartate 446, and glutamate 455. Positions 489–650 (ITNDEVIIKA…GVKVFGNEPA (162 aa)) constitute a CBM3 domain. The 67-residue stretch at 658-724 (PEILYGDVNS…LLGTITQLPQ (67 aa)) folds into the Dockerin domain.

Belongs to the glycosyl hydrolase 9 (cellulase E) family.

The catalysed reaction is Endohydrolysis of (1-&gt;4)-beta-D-glucosidic linkages in cellulose, lichenin and cereal beta-D-glucans.. It participates in glycan metabolism; cellulose degradation. The biological conversion of cellulose to glucose generally requires three types of hydrolytic enzymes: (1) Endoglucanases which cut internal beta-1,4-glucosidic bonds; (2) Exocellobiohydrolases that cut the disaccharide cellobiose from the non-reducing end of the cellulose polymer chain; (3) Beta-1,4-glucosidases which hydrolyze the cellobiose and other short cello-oligosaccharides to glucose. This Ruminiclostridium cellulolyticum (strain ATCC 35319 / DSM 5812 / JCM 6584 / H10) (Clostridium cellulolyticum) protein is Endoglucanase G (celCCG).